We begin with the raw amino-acid sequence, 276 residues long: Ribosomal RNA small subunit methyltransferase A (276 aa).

S-adenosyl-L-methionine contacts are provided by His-15, Leu-17, Gly-42, Glu-64, Asp-89, and Asn-108.

This sequence belongs to the class I-like SAM-binding methyltransferase superfamily. rRNA adenine N(6)-methyltransferase family. RsmA subfamily.

It localises to the cytoplasm. The enzyme catalyses adenosine(1518)/adenosine(1519) in 16S rRNA + 4 S-adenosyl-L-methionine = N(6)-dimethyladenosine(1518)/N(6)-dimethyladenosine(1519) in 16S rRNA + 4 S-adenosyl-L-homocysteine + 4 H(+). Specifically dimethylates two adjacent adenosines (A1518 and A1519) in the loop of a conserved hairpin near the 3'-end of 16S rRNA in the 30S particle. May play a critical role in biogenesis of 30S subunits. This is Ribosomal RNA small subunit methyltransferase A from Prochlorococcus marinus (strain MIT 9312).